The primary structure comprises 198 residues: C4b-binding protein beta chain (198 aa).

Residues 1–17 form the signal peptide; the sequence is MFFWLMCYLVDVWLISA. In terms of domain architecture, Sushi 1; atypical; lacks a Cys spans 22 to 77; that stretch reads HCPDPLLVTDEFSSLEPVNVNDTFMFKCNEHCIFKGSNWSQCRENHTRVTHSPVSK. Asn-42, Asn-59, and Asn-66 each carry an N-linked (GlcNAc...) asparagine glycan. The region spanning 79–135 is the Sushi 2 domain; it reads RDCGPPETPTHGYFEGRDFKSGSTITYYCEARYRLVGTQHQQCIDGEWTSAPPICEL. Intrachain disulfides connect Cys-81–Cys-121 and Cys-107–Cys-133.

Disulfide-linked complex of alpha and beta chains.

It localises to the secreted. Controls the classical pathway of complement activation. It binds as a cofactor to C3b/C4b inactivator (C3bINA), which then hydrolyzes the complement fragment C4b. It also accelerates the degradation of the C4bC2a complex (C3 convertase) by dissociating the complement fragment C2a. It also interacts with serum amyloid P component. This Bos taurus (Bovine) protein is C4b-binding protein beta chain (C4BPB).